The chain runs to 157 residues: Protein AE7 (157 aa).

This sequence belongs to the MIP18 family. In terms of assembly, part of a complex formed of AE7, CIA1, MMS19 and NAR1. Interacts with CIA1 and MMS19, but not with NAR1. As to expression, expressed in the embryo, shoot apical meristem, leaf primordia, inflorescence and all floral organs.

Its subcellular location is the nucleus. It localises to the cytoplasm. Its function is as follows. Central member of the cytosolic iron-sulfur (Fe-S) protein assembly (CIA) pathway. Involved in leaf polarity formation. Promotes leaf adaxial identity. May play a role in the cell cycle progression and is required for cell proliferation. The chain is Protein AE7 from Arabidopsis thaliana (Mouse-ear cress).